We begin with the raw amino-acid sequence, 401 residues long: Secreted LysM effector Blys8 (401 aa).

The N-terminal stretch at 1–19 (MRTLAIFFIGAAVAAHVSP) is a signal peptide. The region spanning 42–89 (TYYDEAYDKSYTCDDLLSAWVISKQDFESWNPAVGSDCKLVLGHSYCV) is the LysM 1 domain. A compositionally biased stretch (low complexity) spans 98–136 (STTTTTTTSTTTKTTTKTTTTTTAAPKPTSSAPSGPSPT). Positions 98–137 (STTTTTTTSTTTKTTTKTTTTTTAAPKPTSSAPSGPSPTQ) are disordered. In terms of domain architecture, LysM 2 spans 146–193 (AYYFVKAGDTCDKISQMYGTFSTAQFIEWNPAVGSSCTGLWAGYYYCV). The tract at residues 201–223 (SRTSTAGPTSTKPANGVTTPQPT) is disordered. Residues 233–279 (QFVYVQPGDQCGTVASRAGVSLSDFLQWNPSTGKDCSGLWANAYACV) form the LysM 3 domain.

Belongs to the secreted LysM effector family.

Might have a role in sequestration of chitin oligosaccharides (breakdown products of fungal cell walls that are released during invasion and act as triggers of host immunity) to dampen host defense. The polypeptide is Secreted LysM effector Blys8 (Beauveria bassiana (strain ARSEF 2860) (White muscardine disease fungus)).